Reading from the N-terminus, the 605-residue chain is Conglutin beta 7 (605 aa).

A signal peptide spans 1-30 (MARMRVRFPTLVLLLGILFLMAVSIGIAYG). The segment covering 37–105 (NHERPGEREH…REPCREREQE (69 aa)) has biased composition (basic and acidic residues). 3 disordered regions span residues 37-193 (NHER…RFQT), 346-367 (LGNE…SYQD), and 382-405 (LRKH…NLRS). Over residues 140-149 (QGSSSSSRKQ) the composition is skewed to low complexity. Positions 150–179 (SGYERRQYHERREQRDEKEKEQDSRSDSRR) are enriched in basic and acidic residues. Positions 184–342 (YHFSSERFQT…TFNTRYEEIQ (159 aa)) constitute a Cupin type-1 1 domain. Residues 401-563 (FNLRSNESIY…TFPGSAQDVE (163 aa)) enclose the Cupin type-1 2 domain. N406 and N513 each carry an N-linked (GlcNAc...) asparagine glycan. The tract at residues 574–593 (FANAQPQQKQQREKEGRRGR) is disordered.

Belongs to the 7S seed storage protein family. As to quaternary structure, component of globulins complexes which accumulate in seeds.

Functionally, seed storage protein. Accumulates during seed development and is hydrolyzed after germination to provide a carbon and nitrogen source for the developing seedling. This Lupinus angustifolius (Narrow-leaved blue lupine) protein is Conglutin beta 7.